The following is a 565-amino-acid chain: CTP synthase (565 aa).

The interval 1–272 is amidoligase domain; sequence MARPKNVKHI…DLRVMKKLGL (272 aa). CTP is bound at residue serine 18. Serine 18 provides a ligand contact to UTP. 19–24 provides a ligand contact to ATP; that stretch reads SLGKGI. Residue tyrosine 59 participates in L-glutamine binding. ATP is bound at residue aspartate 76. The Mg(2+) site is built by aspartate 76 and glutamate 146. Residues 153-155, 193-198, and lysine 229 contribute to the CTP site; these read DIE and KTKPTQ. UTP contacts are provided by residues 193–198 and lysine 229; that span reads KTKPTQ. One can recognise a Glutamine amidotransferase type-1 domain in the interval 299-543; the sequence is TIGVCGKYTE…VQAAKEFAMG (245 aa). Position 363 (glycine 363) interacts with L-glutamine. Cysteine 390 (nucleophile; for glutamine hydrolysis) is an active-site residue. L-glutamine-binding positions include 391–394, glutamate 414, and arginine 471; that span reads LGMQ. Active-site residues include histidine 516 and glutamate 518.

The protein belongs to the CTP synthase family. In terms of assembly, homotetramer.

It catalyses the reaction UTP + L-glutamine + ATP + H2O = CTP + L-glutamate + ADP + phosphate + 2 H(+). It carries out the reaction L-glutamine + H2O = L-glutamate + NH4(+). The catalysed reaction is UTP + NH4(+) + ATP = CTP + ADP + phosphate + 2 H(+). Its pathway is pyrimidine metabolism; CTP biosynthesis via de novo pathway; CTP from UDP: step 2/2. Its activity is regulated as follows. Allosterically activated by GTP, when glutamine is the substrate; GTP has no effect on the reaction when ammonia is the substrate. The allosteric effector GTP functions by stabilizing the protein conformation that binds the tetrahedral intermediate(s) formed during glutamine hydrolysis. Inhibited by the product CTP, via allosteric rather than competitive inhibition. Its function is as follows. Catalyzes the ATP-dependent amination of UTP to CTP with either L-glutamine or ammonia as the source of nitrogen. Regulates intracellular CTP levels through interactions with the four ribonucleotide triphosphates. The polypeptide is CTP synthase (Chlorobaculum parvum (strain DSM 263 / NCIMB 8327) (Chlorobium vibrioforme subsp. thiosulfatophilum)).